The sequence spans 401 residues: Carbamoyl phosphate synthase small chain (401 aa).

Residues 1-203 (MTATPAWTIQ…EGYSTLGETD (203 aa)) form a CPSase region. L-glutamine contacts are provided by Ser-56, Gly-255, and Gly-257. A Glutamine amidotransferase type-1 domain is found at 207 to 395 (HVVALDYGVK…LNLIREKKGE (189 aa)). Catalysis depends on Cys-284, which acts as the Nucleophile. Positions 285, 288, 326, 328, and 329 each coordinate L-glutamine. Active-site residues include His-368 and Glu-370.

It belongs to the CarA family. In terms of assembly, composed of two chains; the small (or glutamine) chain promotes the hydrolysis of glutamine to ammonia, which is used by the large (or ammonia) chain to synthesize carbamoyl phosphate. Tetramer of heterodimers (alpha,beta)4.

The catalysed reaction is hydrogencarbonate + L-glutamine + 2 ATP + H2O = carbamoyl phosphate + L-glutamate + 2 ADP + phosphate + 2 H(+). The enzyme catalyses L-glutamine + H2O = L-glutamate + NH4(+). Its pathway is amino-acid biosynthesis; L-arginine biosynthesis; carbamoyl phosphate from bicarbonate: step 1/1. The protein operates within pyrimidine metabolism; UMP biosynthesis via de novo pathway; (S)-dihydroorotate from bicarbonate: step 1/3. Small subunit of the glutamine-dependent carbamoyl phosphate synthetase (CPSase). CPSase catalyzes the formation of carbamoyl phosphate from the ammonia moiety of glutamine, carbonate, and phosphate donated by ATP, constituting the first step of 2 biosynthetic pathways, one leading to arginine and/or urea and the other to pyrimidine nucleotides. The small subunit (glutamine amidotransferase) binds and cleaves glutamine to supply the large subunit with the substrate ammonia. This chain is Carbamoyl phosphate synthase small chain, found in Rhizobium meliloti (strain 1021) (Ensifer meliloti).